The chain runs to 92 residues: MARSIWKGPFVDGYLLKKAEAARASTRSEVIKIWSRRSTILPQFVGLTFGVYNGHKHVPVSVTEDMIGHKFGEFSPTRTFHGHAADKKARRG.

It belongs to the universal ribosomal protein uS19 family.

Protein S19 forms a complex with S13 that binds strongly to the 16S ribosomal RNA. The sequence is that of Small ribosomal subunit protein uS19 from Beijerinckia indica subsp. indica (strain ATCC 9039 / DSM 1715 / NCIMB 8712).